The primary structure comprises 553 residues: Fusion glycoprotein F0 (553 aa).

The N-terminal stretch at 1 to 31 is a signal peptide; that stretch reads MGSRSSTRIPVPLMLIIRTALTLSCIRLTSS. The Extracellular segment spans residues 32–500; it reads LDGRPLAAAG…VNVKLTSTSA (469 aa). 3 cysteine pairs are disulfide-bonded: cysteine 76–cysteine 199, cysteine 338–cysteine 347, and cysteine 362–cysteine 370. The N-linked (GlcNAc...) asparagine; by host glycan is linked to asparagine 85. Residues 117-141 are fusion peptide; that stretch reads FIGAIIGSVALGVATAAQITAASAL. A coiled-coil region spans residues 142–170; sequence IQANQNAANILRLKESIAATNEAVHEVTD. An N-linked (GlcNAc...) asparagine; by host glycan is attached at asparagine 191. Asparagine 366, asparagine 447, and asparagine 471 each carry an N-linked (GlcNAc...) asparagine; by host glycan. Residues 466 to 491 are a coiled coil; the sequence is ELGNVNNSISNALNKLEESNSKLDKV. Residues 501–521 form a helical membrane-spanning segment; sequence LITYIVLTVISLVFGVLSLVL. The Cytoplasmic segment spans residues 522–553; sequence ACYLMYKQKAQQKTLLWLGNNTLDQMRATTKI. Cysteine 523 carries the S-palmitoyl cysteine; by host lipid modification.

It belongs to the paramyxoviruses fusion glycoprotein family. In terms of assembly, homotrimer of disulfide-linked F1-F2. Post-translationally, the inactive precursor F0 is glycosylated and proteolytically cleaved into F1 and F2 to be functionally active. The cleavage is mediated by cellular proteases during the transport and maturation of the polypeptide.

The protein localises to the virion membrane. Its subcellular location is the host cell membrane. Its function is as follows. Class I viral fusion protein. Under the current model, the protein has at least 3 conformational states: pre-fusion native state, pre-hairpin intermediate state, and post-fusion hairpin state. During viral and plasma cell membrane fusion, the heptad repeat (HR) regions assume a trimer-of-hairpins structure, positioning the fusion peptide in close proximity to the C-terminal region of the ectodomain. The formation of this structure appears to drive apposition and subsequent fusion of viral and plasma cell membranes. Directs fusion of viral and cellular membranes leading to delivery of the nucleocapsid into the cytoplasm. This fusion is pH independent and occurs directly at the outer cell membrane. The trimer of F1-F2 (F protein) probably interacts with HN at the virion surface. Upon HN binding to its cellular receptor, the hydrophobic fusion peptide is unmasked and interacts with the cellular membrane, inducing the fusion between cell and virion membranes. Later in infection, F proteins expressed at the plasma membrane of infected cells could mediate fusion with adjacent cells to form syncytia, a cytopathic effect that could lead to tissue necrosis. This chain is Fusion glycoprotein F0 (F), found in Gallus gallus (Chicken).